The following is a 399-amino-acid chain: MNIHEHQAKAVLAEFGVAVPRGYPAFSVDEAVQAAEKLGGPVFVVKSQIHAGGRGKGRFEGLGPDAKGGVRVVKSVDEVKANAEEMLGRVLVTHQTGAAGKQVNRLYIEEGAQIAKEFYLSLLVDRETSWVSVVASTEGGMDIEEVAHATPEKIVTFSIDPATGVFPHHGRHLAKALGLTGGLAKEAATLLNQLYAAFLAKDMSMLEINPLIVTGDDHLRVLDAKVSFDSNALFRHADVVALRDESEEDPKEIEASKYDLSYIALDGEIGCMVNGAGLAMATMDIIKLYGAEPANFLDVGGGASKEKVTAAFKIITADPNVKGILVNIFGGIMRCDIIAEGVVAAVKEVGLKVPLVVRLEGTNVDLGKKIINESGLNVIAANDLSDGAEKIVKAVRGAA.

In terms of domain architecture, ATP-grasp spans 9-254 (KAVLAEFGVA…ESEEDPKEIE (246 aa)). ATP contacts are provided by residues lysine 46, 53-55 (GRG), glutamate 109, alanine 112, and glutamate 117. Positions 209 and 223 each coordinate Mg(2+). Residues asparagine 274 and 331–333 (GIM) contribute to the substrate site.

It belongs to the succinate/malate CoA ligase beta subunit family. In terms of assembly, heterotetramer of two alpha and two beta subunits. It depends on Mg(2+) as a cofactor.

It carries out the reaction succinate + ATP + CoA = succinyl-CoA + ADP + phosphate. The catalysed reaction is GTP + succinate + CoA = succinyl-CoA + GDP + phosphate. It participates in carbohydrate metabolism; tricarboxylic acid cycle; succinate from succinyl-CoA (ligase route): step 1/1. In terms of biological role, succinyl-CoA synthetase functions in the citric acid cycle (TCA), coupling the hydrolysis of succinyl-CoA to the synthesis of either ATP or GTP and thus represents the only step of substrate-level phosphorylation in the TCA. The beta subunit provides nucleotide specificity of the enzyme and binds the substrate succinate, while the binding sites for coenzyme A and phosphate are found in the alpha subunit. This is Succinate--CoA ligase [ADP-forming] subunit beta from Phenylobacterium zucineum (strain HLK1).